Reading from the N-terminus, the 350-residue chain is Tetraacyldisaccharide 4'-kinase (350 aa).

48 to 55 (SAGGTGKT) contacts ATP.

It belongs to the LpxK family.

The enzyme catalyses a lipid A disaccharide + ATP = a lipid IVA + ADP + H(+). It participates in glycolipid biosynthesis; lipid IV(A) biosynthesis; lipid IV(A) from (3R)-3-hydroxytetradecanoyl-[acyl-carrier-protein] and UDP-N-acetyl-alpha-D-glucosamine: step 6/6. Transfers the gamma-phosphate of ATP to the 4'-position of a tetraacyldisaccharide 1-phosphate intermediate (termed DS-1-P) to form tetraacyldisaccharide 1,4'-bis-phosphate (lipid IVA). The sequence is that of Tetraacyldisaccharide 4'-kinase from Chlorobium limicola (strain DSM 245 / NBRC 103803 / 6330).